Here is a 212-residue protein sequence, read N- to C-terminus: Large ribosomal subunit protein bL25 (212 aa).

Residues Leu-181 to Glu-212 are disordered. The span at Val-188–Ser-197 shows a compositional bias: acidic residues.

This sequence belongs to the bacterial ribosomal protein bL25 family. CTC subfamily. As to quaternary structure, part of the 50S ribosomal subunit; part of the 5S rRNA/L5/L18/L25 subcomplex. Contacts the 5S rRNA. Binds to the 5S rRNA independently of L5 and L18.

Its function is as follows. This is one of the proteins that binds to the 5S RNA in the ribosome where it forms part of the central protuberance. The polypeptide is Large ribosomal subunit protein bL25 (Finegoldia magna (strain ATCC 29328 / DSM 20472 / WAL 2508) (Peptostreptococcus magnus)).